Consider the following 66-residue polypeptide: Large ribosomal subunit protein bL33c (66 aa).

The protein belongs to the bacterial ribosomal protein bL33 family.

The protein localises to the plastid. Its subcellular location is the chloroplast. The sequence is that of Large ribosomal subunit protein bL33c from Cycas taitungensis (Prince sago).